The chain runs to 257 residues: MSIHLVIIDALNLIRRVHSVQSDPTDIARTITTTARTLNRILNESKPTHIIAVFDHHLQDRGWRAEVLPAYKQNRKPMPEPLMKGLDAIQQAWWELGIDSLLSDGDEADDLVATLAKKVADHGETVTIISTDKGYCQLLSPTLQIRDYFQHRWLDKPFIEAEFGVKPEQLADYWGLTGVSSSQVPGIPGIGPKAAKEILTTYPDIETAFLAEDLPKKYRKKFDEHIESARVCKLVSALKTDIDLGFNLQDIRYEAVS.

D109 serves as a coordination point for Mg(2+). One can recognise a 5'-3' exonuclease domain in the interval 165 to 254 (VKPEQLADYW…GFNLQDIRYE (90 aa)). Positions 176, 185, 187, and 190 each coordinate K(+). Positions 189–194 (GIGPKA) are interaction with DNA.

The protein belongs to the Xni family. The cofactor is Mg(2+). It depends on K(+) as a cofactor.

In terms of biological role, has flap endonuclease activity. During DNA replication, flap endonucleases cleave the 5'-overhanging flap structure that is generated by displacement synthesis when DNA polymerase encounters the 5'-end of a downstream Okazaki fragment. This is Flap endonuclease Xni from Vibrio atlanticus (strain LGP32) (Vibrio splendidus (strain Mel32)).